The sequence spans 414 residues: MGGASACIPLCLLLATARMARPQTPERPVFTCGGILTGESGFIGSEGFPGMYPPNSKCTWKITVPEGKVVVLNFRFIDLENDNLCRYDFVDVYNGHANGQRIGRFCGTFRPGSLVASGNKMTVQMISDANTAGSGFMATYSAAAPDGKGDRYCGGRLEKPSGTFKTPNWPDRDYPVGVTCVWHIIAPKNQLIELKFEKFDVERDNYCRYDYVAVFNGGEVNDAKRIGKYCGDSPPVPIVSERNELLIQFLSDLSLTADGFIGHYKFRPKKFPTTTTTPVTTTLPVTTGLKPTVALCQQKCRRMGTLESNYCSSNFVLAGTVITTVTRGGSLHATVSIISIYREGNLAIQQAGKNMSVKLTVVCRQCPLLRRGLNYIIMGQVGEDGRGKIMPNSFVKMFKNKNQKPMNALKNKQC.

The first 22 residues, 1 to 22 (MGGASACIPLCLLLATARMARP), serve as a signal peptide directing secretion. 7 disulfides stabilise this stretch: cysteine 32–cysteine 58, cysteine 85–cysteine 106, cysteine 153–cysteine 180, cysteine 207–cysteine 230, cysteine 296–cysteine 363, cysteine 300–cysteine 366, and cysteine 311–cysteine 414. CUB domains are found at residues 32–143 (CGGI…YSAA) and 153–267 (CGGR…YKFR). An NTR domain is found at 296–414 (CQQKCRRMGT…PMNALKNKQC (119 aa)). N-linked (GlcNAc...) asparagine glycosylation is present at asparagine 354.

Interacts with heparin with high affinity, and type I or II collagen. O-glycosylated; contains sialic acid.

Its subcellular location is the secreted. Functionally, binds to the C-terminal propeptide of types I and II procollagens and may enhance the cleavage of that propeptide by BMP1. In Mus musculus (Mouse), this protein is Procollagen C-endopeptidase enhancer 2 (Pcolce2).